Consider the following 1151-residue polypeptide: ATP-dependent RNA helicase ddx46 (1151 aa).

Composition is skewed to basic and acidic residues over residues 1 to 26 (MDEY…DNRN) and 35 to 51 (YRDD…DRSH). Disordered stretches follow at residues 1 to 138 (MDEY…SRFD), 166 to 224 (MYQQ…VFQQ), 287 to 358 (QELK…PLVN), and 424 to 449 (TSQM…DKTI). Over residues 52-73 (YNNNNNNNNNNNNNNNNNNGNG) the composition is skewed to low complexity. Over residues 81–90 (SSQNKYQNHH) the composition is skewed to polar residues. Low complexity-rich tracts occupy residues 91-124 (QQSP…QPHI), 166-199 (MYQQ…FQHH), 207-224 (QPPV…VFQQ), and 291-339 (ASGS…TTSP). Over residues 428-443 (IDDDEKLEEESEGEDD) the composition is skewed to acidic residues. Positions 509–537 (QSWAQAGLTEKVHLLLKKFQYEKPTSIQA) match the Q motif motif. In terms of domain architecture, Helicase ATP-binding spans 540-718 (IPAIMNGRDL…KKILNKPLEI (179 aa)). 553–560 (ARTGSGKT) is an ATP binding site. The short motif at 666–669 (DEAD) is the DEAD box element. A Helicase C-terminal domain is found at 729-890 (DIEQFVEVRP…KVPDELRKLN (162 aa)). Positions 904–972 (LLAPTGFTGR…EKEKQLLSEK (69 aa)) are disordered. Residues 915-930 (HKFDAAEEDKKNIERK) are compositionally biased toward basic and acidic residues. A compositionally biased stretch (acidic residues) spans 938–948 (IEEEEEEEDED). Residues 949–972 (KEKAEKEKLAAASAEKEKQLLSEK) show a composition bias toward basic and acidic residues.

This sequence belongs to the DEAD box helicase family. DDX46/PRP5 subfamily. In terms of assembly, component of the 17S U2 SnRNP complex, a ribonucleoprotein complex that contains small nuclear RNA (snRNA) U2 and a number of specific proteins.

It localises to the nucleus speckle. It catalyses the reaction ATP + H2O = ADP + phosphate + H(+). In terms of biological role, component of the 17S U2 SnRNP complex of the spliceosome, a large ribonucleoprotein complex that removes introns from transcribed pre-mRNAs. This chain is ATP-dependent RNA helicase ddx46 (helB1), found in Dictyostelium discoideum (Social amoeba).